Reading from the N-terminus, the 646-residue chain is Esterase EstA (646 aa).

The first 24 residues, 1-24 (MIRMALKPLVAACLLASLSTAPQA), serve as a signal peptide directing secretion. At 25 to 397 (APSPYSTLVV…DSAASGDGNG (373 aa)) the chain is on the extracellular side. The active-site Nucleophile is the Ser38. Active-site residues include Asp310 and His313. Residues 366-646 (QNVGQWRGFV…SVSLALSLDF (281 aa)) enclose the Autotransporter domain. Residues 398–408 (YNLTLGGSYRI) form a beta stranded membrane-spanning segment. Residues 409-410 (DE) lie on the Periplasmic side of the membrane. The beta stranded transmembrane segment at 411-421 (AWRAGVAAGFY) threads the bilayer. At 422–437 (RQKLEAGAKDSDYRMN) the chain is on the extracellular side. The beta stranded transmembrane segment at 438–447 (SYMASAFVQY) threads the bilayer. Over 448 to 451 (QENR) the chain is Periplasmic. Residues 452–461 (WWADAALTGG) traverse the membrane as a beta stranded segment. Residues 462–488 (YLDYDDLKRKFALGGGERSEKGDTNGH) are Extracellular-facing. A beta stranded transmembrane segment spans residues 489–500 (LWAFSARLGYDI). Residues 501–507 (AQQADSP) lie on the Periplasmic side of the membrane. Residues 508 to 518 (WHLSPFVSADY) traverse the membrane as a beta stranded segment. Topologically, residues 519–547 (ARVEVDGYSEKGASATALDYDDQKRSSKR) are extracellular. Residues 548–558 (LGAGLQGKYAF) traverse the membrane as a beta stranded segment. The Periplasmic segment spans residues 559–561 (GSD). Residues 562–571 (TQLFAEYAHE) traverse the membrane as a beta stranded segment. At 572-605 (REYEDDTQDLTMSLNSLPGNRFTLEGYTPQDHLN) the chain is on the extracellular side. The beta stranded transmembrane segment at 606 to 615 (RVSLGFSQKL) threads the bilayer. Topologically, residues 616 to 618 (APE) are periplasmic. The chain crosses the membrane as a beta stranded span at residues 619 to 628 (LSLRGGYNWR). The Extracellular segment spans residues 629–636 (KGEDDTQQ). The chain crosses the membrane as a beta stranded span at residues 637-646 (SVSLALSLDF).

Belongs to the 'GDSL' lipolytic enzyme family.

The protein resides in the cell outer membrane. The enzyme catalyses a carboxylic ester + H2O = an alcohol + a carboxylate + H(+). In terms of biological role, esterase whose enzymatic activity is required for rhamnolipid production, all kinds of cell motility (swimming, swarming, and twitching), and biofilm formation; the exact role of EstA in these processes is unclear. In vitro, has pronounced esterase activities towards p-nitrophenyl esters of short acyl chain length (C4-C6) and Tween detergents. Also shows relatively high activity towards beta-naphthyl butyrate, whereas its activities towards triacylglycerols and acyls-CoA are negligible. The polypeptide is Esterase EstA (estA) (Pseudomonas aeruginosa (strain ATCC 15692 / DSM 22644 / CIP 104116 / JCM 14847 / LMG 12228 / 1C / PRS 101 / PAO1)).